Reading from the N-terminus, the 620-residue chain is Somatic embryogenesis receptor kinase 4 (620 aa).

An N-terminal signal peptide occupies residues methionine 1–glycine 33. The Extracellular portion of the chain corresponds to aspartate 34–glycine 234. 5 LRR repeats span residues asparagine 100–leucine 122, glutamate 124–leucine 146, lysine 148–valine 170, glutamine 171–serine 193, and leucine 194–serine 215. Asparagine 110 carries N-linked (GlcNAc...) asparagine glycosylation. N-linked (GlcNAc...) asparagine glycans are attached at residues asparagine 156, asparagine 189, and asparagine 202. The segment at leucine 205–glutamine 227 is disordered. Pro residues predominate over residues proline 209 to serine 224. The helical transmembrane segment at glycine 235–leucine 255 threads the bilayer. Residues arginine 256 to arginine 620 lie on the Cytoplasmic side of the membrane. Residue threonine 291 is modified to Phosphothreonine. The 298-residue stretch at phenylalanine 294 to asparagine 591 folds into the Protein kinase domain. Serine 295 bears the Phosphoserine mark. ATP is bound by residues leucine 300–valine 308 and lysine 322. Phosphoserine is present on residues serine 375 and serine 378. The active-site Proton acceptor is aspartate 421. A phosphothreonine mark is found at threonine 454, threonine 455, and threonine 460. A Phosphotyrosine modification is found at tyrosine 468. A Phosphoserine modification is found at serine 470. Position 471 is a phosphothreonine (threonine 471). Serine 475 bears the Phosphoserine mark. Threonine 551 bears the Phosphothreonine mark.

It belongs to the protein kinase superfamily. Ser/Thr protein kinase family. Interacts with the EF-Tu receptor EFR and FLS2 in a specific ligand-induced manner. Interacts with TMK4/BARK1. Interacts with ERECTA in a EPF2-induced manner. Interacts with ERL1 in a EPF1-induced manner. Interacts with TMM. Forms a complex with MIK2 in response to SCOOP12 perception. Post-translationally, autophosphorylated on Thr and Tyr residues.

It localises to the cell membrane. It carries out the reaction L-seryl-[protein] + ATP = O-phospho-L-seryl-[protein] + ADP + H(+). It catalyses the reaction L-threonyl-[protein] + ATP = O-phospho-L-threonyl-[protein] + ADP + H(+). The enzyme catalyses L-tyrosyl-[protein] + ATP = O-phospho-L-tyrosyl-[protein] + ADP + H(+). Dual specificity kinase acting on both serine/threonine- and tyrosine-containing substrates. Positively regulates the BR-dependent plant growth pathway and negatively regulates the BR-independent cell-death pathway. Required during SCOOP small peptides (e.g. SCOOP10 and SCOOP12) perception and signaling; associates with MIK2 as a coreceptor upon MIK2 perception of SCOOP peptides, and relays the signaling through the activation of receptor-like cytosolic kinases (RLCKs) BIK1 and PBL1. The sequence is that of Somatic embryogenesis receptor kinase 4 from Arabidopsis thaliana (Mouse-ear cress).